The chain runs to 354 residues: GTPase Obg (354 aa).

Positions 1 to 159 (MKFLDQCKIY…RWIWLRLKLI (159 aa)) constitute an Obg domain. An OBG-type G domain is found at 160–328 (ADVGLVGLPN…LLRAAYKQVR (169 aa)). Residues 166 to 173 (GLPNAGKS), 191 to 195 (FTTLT), 213 to 216 (DIPG), 280 to 283 (NKID), and 309 to 311 (SGV) contribute to the GTP site. Residues serine 173 and threonine 193 each coordinate Mg(2+). Residues 335 to 345 (EEEIDDDEDHV) show a composition bias toward acidic residues. The interval 335-354 (EEEIDDDEDHVDETPGGWTP) is disordered.

It belongs to the TRAFAC class OBG-HflX-like GTPase superfamily. OBG GTPase family. In terms of assembly, monomer. Requires Mg(2+) as cofactor.

It localises to the cytoplasm. Its function is as follows. An essential GTPase which binds GTP, GDP and possibly (p)ppGpp with moderate affinity, with high nucleotide exchange rates and a fairly low GTP hydrolysis rate. Plays a role in control of the cell cycle, stress response, ribosome biogenesis and in those bacteria that undergo differentiation, in morphogenesis control. The sequence is that of GTPase Obg from Caulobacter vibrioides (strain ATCC 19089 / CIP 103742 / CB 15) (Caulobacter crescentus).